We begin with the raw amino-acid sequence, 361 residues long: D-amino-acid oxidase (361 aa).

Positions 1–22 (MSNTIVVVGAGVIGLTSALLLS) are cleaved as a signal peptide. Positions 10, 13, 34, 35, 45, 46, 50, and 52 each coordinate FAD. 2 N-linked (GlcNAc...) asparagine glycosylation sites follow: Asn193 and Asn222. (R)-lactate contacts are provided by Tyr242, Tyr258, and Arg305. Positions 242, 258, and 305 each coordinate anthranilate. Residues Arg305, Ser332, Gly335, Tyr336, and Gln337 each coordinate FAD. The Microbody targeting signal signature appears at 359-361 (SKL).

This sequence belongs to the DAMOX/DASOX family. The cofactor is FAD. Post-translationally, the N-terminus is blocked.

It localises to the peroxisome matrix. The catalysed reaction is a D-alpha-amino acid + O2 + H2O = a 2-oxocarboxylate + H2O2 + NH4(+). Functionally, catalyzes the oxidative deamination of D-amino acids with broad substrate specificity. Enables the organism to utilize D-amino acids as a source of nutrients. This Fusarium vanettenii (Neocosmospora pisi) protein is D-amino-acid oxidase.